We begin with the raw amino-acid sequence, 171 residues long: Co-chaperone protein HscB (171 aa).

The region spanning 2–74 is the J domain; that stretch reads DYFTLFGLPA…LTRAEYLLSL (73 aa).

Belongs to the HscB family. In terms of assembly, interacts with HscA and stimulates its ATPase activity. Interacts with IscU.

Co-chaperone involved in the maturation of iron-sulfur cluster-containing proteins. Seems to help targeting proteins to be folded toward HscA. The protein is Co-chaperone protein HscB of Klebsiella pneumoniae (strain 342).